The following is a 261-amino-acid chain: Polyamine aminopropyltransferase (261 aa).

The 219-residue stretch at 1-219 folds into the PABS domain; the sequence is MHPFRRRVRP…AVMAFRQSPS (219 aa). S-methyl-5'-thioadenosine contacts are provided by residues D96 and 124–125; that span reads DG. The Proton acceptor role is filled by D142.

Belongs to the spermidine/spermine synthase family. As to quaternary structure, homodimer or homotetramer.

The protein resides in the cytoplasm. The enzyme catalyses S-adenosyl 3-(methylsulfanyl)propylamine + putrescine = S-methyl-5'-thioadenosine + spermidine + H(+). It participates in amine and polyamine biosynthesis; spermidine biosynthesis; spermidine from putrescine: step 1/1. In terms of biological role, catalyzes the irreversible transfer of a propylamine group from the amino donor S-adenosylmethioninamine (decarboxy-AdoMet) to putrescine (1,4-diaminobutane) to yield spermidine. The chain is Polyamine aminopropyltransferase from Chromobacterium violaceum (strain ATCC 12472 / DSM 30191 / JCM 1249 / CCUG 213 / NBRC 12614 / NCIMB 9131 / NCTC 9757 / MK).